We begin with the raw amino-acid sequence, 139 residues long: Large ribosomal subunit protein uL16 (139 aa).

Belongs to the universal ribosomal protein uL16 family. In terms of assembly, part of the 50S ribosomal subunit.

Binds 23S rRNA and is also seen to make contacts with the A and possibly P site tRNAs. The polypeptide is Large ribosomal subunit protein uL16 (Mycoplasma pneumoniae (strain ATCC 29342 / M129 / Subtype 1) (Mycoplasmoides pneumoniae)).